The following is a 264-amino-acid chain: Non-homologous end-joining factor xrc4 (264 aa).

Residues 173–186 show a composition bias toward basic and acidic residues; it reads RNNEDNEDNHHINY. The segment at 173–264 is disordered; sequence RNNEDNEDNH…SHESSETVSE (92 aa). A compositionally biased stretch (polar residues) spans 200 to 209; that stretch reads QEGVNSSAVS. A compositionally biased stretch (basic and acidic residues) spans 248-264; sequence DDSHRRSSHESSETVSE.

Belongs to the XRCC4-XLF family. XRCC4 subfamily. As to quaternary structure, interacts with lig4; the interaction is direct.

It localises to the nucleus. In terms of biological role, involved in double-strand break repair via non-homologous end joining (NHEJ); the repair of a double-strand break in DNA in which the two broken ends are rejoined with little or no sequence complementarity. The chain is Non-homologous end-joining factor xrc4 from Schizosaccharomyces pombe (strain 972 / ATCC 24843) (Fission yeast).